The sequence spans 517 residues: Ribonuclease Y (517 aa).

A helical membrane pass occupies residues 3–23 (AILYVIVAVIALILGGAAGVA). A KH domain is found at 207–292 (TVTVVSLPND…EMVEKAQKEV (86 aa)). Residues 333–426 (VLKHSIEVAH…VAAADAISAA (94 aa)) form the HD domain.

Belongs to the RNase Y family.

It is found in the cell membrane. Functionally, endoribonuclease that initiates mRNA decay. The polypeptide is Ribonuclease Y (Symbiobacterium thermophilum (strain DSM 24528 / JCM 14929 / IAM 14863 / T)).